A 281-amino-acid polypeptide reads, in one-letter code: Aliphatic sulfonates import ATP-binding protein SsuB (281 aa).

The region spanning 40 to 263 (LDIRGLRKSF…QRGSAELAAL (224 aa)) is the ABC transporter domain. 72-79 (GRSGCGKS) provides a ligand contact to ATP.

This sequence belongs to the ABC transporter superfamily. Aliphatic sulfonates importer (TC 3.A.1.17.2) family. The complex is composed of two ATP-binding proteins (SsuB), two transmembrane proteins (SsuC) and a solute-binding protein (SsuA).

It is found in the cell inner membrane. The enzyme catalyses ATP + H2O + aliphatic sulfonate-[sulfonate-binding protein]Side 1 = ADP + phosphate + aliphatic sulfonateSide 2 + [sulfonate-binding protein]Side 1.. Functionally, part of the ABC transporter complex SsuABC involved in aliphatic sulfonates import. Responsible for energy coupling to the transport system. This chain is Aliphatic sulfonates import ATP-binding protein SsuB, found in Rhodopseudomonas palustris (strain ATCC BAA-98 / CGA009).